An 85-amino-acid chain; its full sequence is UPF0386 protein RHE_CH01859 (85 aa).

Belongs to the UPF0386 family.

The sequence is that of UPF0386 protein RHE_CH01859 from Rhizobium etli (strain ATCC 51251 / DSM 11541 / JCM 21823 / NBRC 15573 / CFN 42).